The sequence spans 24 residues: Brevinin-1BYb (24 aa).

An intrachain disulfide couples Cys-18 to Cys-24.

Expressed by the skin glands.

It is found in the secreted. Functionally, antibacterial activity against Gram-positive bacterium S.aureus and Gram-negative bacterium E.coli. Has moderate antifungal activity against C.albicans and strong hemolytic activity. This Rana boylii (Foothill yellow-legged frog) protein is Brevinin-1BYb.